Consider the following 59-residue polypeptide: Cuticle protein 16 isoform D (59 aa).

This chain is Cuticle protein 16 isoform D, found in Limulus polyphemus (Atlantic horseshoe crab).